The sequence spans 335 residues: MDAIADPNFQQTKLRSTATEDIPSLLTVVLDISPRLWAEFDHRSGEKQSVTTVLKSLIVFLNSHLAFNSANQVAVIAAFSQGIQYLYPRSSDTSEQNAGNSKDLSIISSHMYRRFRNVDETLIEEFYKLYQREESLIDKPVQKSTLSGAMAAALTYTNRLTKEFESISLRSRLLVITCGSSREKDEIFQYIPIMNCIFSATKLKCPIDVIKIGGNKQSTFLQQTTDATNGVYIHLESTNGIIQYLSTAMSIDPSLRQIIVRPTQGSVDFRTSCYLTGKVVAIGYICSVCLCVLSIIPPGNKCPACDSQFDERVIAKLKKKPVVPKSTLKKVKKKV.

The C4-type zinc finger occupies 286–305; the sequence is CSVCLCVLSIIPPGNKCPAC.

This sequence belongs to the TFB4 family. In terms of assembly, component of the 7-subunit TFIIH core complex composed of XPB/SSL2, XPD/RAD3, SSL1, TFB1, TFB2, TFB4 and TFB5, which is active in NER. The core complex associates with the 3-subunit CTD-kinase module TFIIK composed of CCL1, KIN28 and TFB3 to form the 10-subunit holoenzyme (holo-TFIIH) active in transcription.

Its subcellular location is the nucleus. Functionally, component of the general transcription and DNA repair factor IIH (TFIIH) core complex, which is involved in general and transcription-coupled nucleotide excision repair (NER) of damaged DNA and, when complexed to TFIIK, in RNA transcription by RNA polymerase II. In NER, TFIIH acts by opening DNA around the lesion to allow the excision of the damaged oligonucleotide and its replacement by a new DNA fragment. In transcription, TFIIH has an essential role in transcription initiation. When the pre-initiation complex (PIC) has been established, TFIIH is required for promoter opening and promoter escape. Phosphorylation of the C-terminal tail (CTD) of the largest subunit of RNA polymerase II by the kinase module TFIIK controls the initiation of transcription. This chain is General transcription and DNA repair factor IIH subunit TFB4 (TFB4), found in Candida glabrata (strain ATCC 2001 / BCRC 20586 / JCM 3761 / NBRC 0622 / NRRL Y-65 / CBS 138) (Yeast).